Consider the following 357-residue polypeptide: GTPase Obg (357 aa).

The 159-residue stretch at 1–159 (MKFVDEAEIQ…RTLKLELKLL (159 aa)) folds into the Obg domain. Positions 160–343 (ADIGMLGFPN…IMKSAMTLFE (184 aa)) constitute an OBG-type G domain. GTP is bound by residues 166 to 173 (GFPNVGKS), 191 to 195 (FTTLY), 213 to 216 (DVPG), 293 to 296 (NKAD), and 324 to 326 (SAV). Residues S173 and T193 each contribute to the Mg(2+) site.

Belongs to the TRAFAC class OBG-HflX-like GTPase superfamily. OBG GTPase family. In terms of assembly, monomer. Mg(2+) serves as cofactor.

The protein resides in the cytoplasm. An essential GTPase which binds GTP, GDP and possibly (p)ppGpp with moderate affinity, with high nucleotide exchange rates and a fairly low GTP hydrolysis rate. Plays a role in control of the cell cycle, stress response, ribosome biogenesis and in those bacteria that undergo differentiation, in morphogenesis control. This chain is GTPase Obg, found in Xylella fastidiosa (strain M12).